The sequence spans 271 residues: MSAPCHCQHADDDYSSIKKLSVLSPELQQEFKDPNHPANLICELCRLFYDNNWVTGTGGGISIRDVDGPNPNLVYIAPSGVQKERIQPWEMFLVELPQEKILRTPNDIPKELTKSYKYKPSACTPLFISCYTLRNAGACIHTHSQHAVMVTLFFENEKEFVISHIEQIKALPKLKYNQETGKIEKIGSMEYYDKLVIPIIENTPHEEDLTDSLQEAIKNYPGASAVLVRRHGIYVWGETVWKAKVYNEAIDYLLELAVKMKLAGIPLVKEE.

Cys-123 is a binding site for substrate. The Zn(2+) site is built by His-141 and His-143. The active-site Proton donor/acceptor is the Glu-166. Residue His-231 coordinates Zn(2+).

Belongs to the aldolase class II family. MtnB subfamily. Requires Zn(2+) as cofactor.

Its subcellular location is the cytoplasm. The catalysed reaction is 5-(methylsulfanyl)-D-ribulose 1-phosphate = 5-methylsulfanyl-2,3-dioxopentyl phosphate + H2O. It functions in the pathway amino-acid biosynthesis; L-methionine biosynthesis via salvage pathway; L-methionine from S-methyl-5-thio-alpha-D-ribose 1-phosphate: step 2/6. Catalyzes the dehydration of methylthioribulose-1-phosphate (MTRu-1-P) into 2,3-diketo-5-methylthiopentyl-1-phosphate (DK-MTP-1-P). In Candida dubliniensis (strain CD36 / ATCC MYA-646 / CBS 7987 / NCPF 3949 / NRRL Y-17841) (Yeast), this protein is Methylthioribulose-1-phosphate dehydratase.